We begin with the raw amino-acid sequence, 86 residues long: U-actitoxin-Avd10a (86 aa).

The first 20 residues, 1 to 20, serve as a signal peptide directing secretion; the sequence is MSRIAILLFVAFLLVAGISA. The propeptide occupies 21 to 42; the sequence is KSTAHFKKNVLADLFKERRFNA. The ShKT domain occupies 51-86; the sequence is CVNIDVDSFCDGMAERGACNIIPQMATNCAKACNSC. 3 cysteine pairs are disulfide-bonded: Cys-51/Cys-86, Cys-60/Cys-79, and Cys-69/Cys-83.

Belongs to the sea anemone type 1 potassium channel toxin family. Type 1b subfamily.

It is found in the secreted. The protein localises to the nematocyst. In terms of biological role, inhibits voltage-gated potassium channels (Kv1/KCNA). The polypeptide is U-actitoxin-Avd10a (Anemonia viridis (Snakelocks anemone)).